Consider the following 318-residue polypeptide: Protease HtpX homolog (318 aa).

2 consecutive transmembrane segments (helical) span residues 6–26 (TAMLLAFMTALFMFVGFLIGG) and 28–48 (GGMMIAFLIAAGMNFFSYWNS). Residue H130 participates in Zn(2+) binding. E131 is an active-site residue. H134 contributes to the Zn(2+) binding site. A run of 2 helical transmembrane segments spans residues 145–165 (ITATLAGAISMLGNFAFFFGG) and 173–193 (PLGFVGVLVAMIVAPLAAMLV). E202 serves as a coordination point for Zn(2+). The interval 284-318 (NVSTGPVRAVNPTRKSRSVPNTGRGGSQPPRGPWS) is disordered.

It belongs to the peptidase M48B family. Zn(2+) is required as a cofactor.

The protein resides in the cell inner membrane. This chain is Protease HtpX homolog, found in Rhizobium etli (strain ATCC 51251 / DSM 11541 / JCM 21823 / NBRC 15573 / CFN 42).